We begin with the raw amino-acid sequence, 160 residues long: SsrA-binding protein (160 aa).

The protein belongs to the SmpB family.

The protein resides in the cytoplasm. In terms of biological role, required for rescue of stalled ribosomes mediated by trans-translation. Binds to transfer-messenger RNA (tmRNA), required for stable association of tmRNA with ribosomes. tmRNA and SmpB together mimic tRNA shape, replacing the anticodon stem-loop with SmpB. tmRNA is encoded by the ssrA gene; the 2 termini fold to resemble tRNA(Ala) and it encodes a 'tag peptide', a short internal open reading frame. During trans-translation Ala-aminoacylated tmRNA acts like a tRNA, entering the A-site of stalled ribosomes, displacing the stalled mRNA. The ribosome then switches to translate the ORF on the tmRNA; the nascent peptide is terminated with the 'tag peptide' encoded by the tmRNA and targeted for degradation. The ribosome is freed to recommence translation, which seems to be the essential function of trans-translation. The sequence is that of SsrA-binding protein from Mannheimia succiniciproducens (strain KCTC 0769BP / MBEL55E).